A 235-amino-acid chain; its full sequence is Urease accessory protein UreF (235 aa).

This sequence belongs to the UreF family. UreD, UreF and UreG form a complex that acts as a GTP-hydrolysis-dependent molecular chaperone, activating the urease apoprotein by helping to assemble the nickel containing metallocenter of UreC. The UreE protein probably delivers the nickel.

The protein localises to the cytoplasm. Required for maturation of urease via the functional incorporation of the urease nickel metallocenter. This is Urease accessory protein UreF from Ureaplasma urealyticum serovar 10 (strain ATCC 33699 / Western).